The following is a 681-amino-acid chain: MAFTGATLTTSTIAATAASGPLMDYLWMLILGFIIAFVLAFSVGANDVANSFGTAVGSGVVTLKQACILASIFETVGSVLLGAKVSETIRKGLIDVEMYNTTQQLLMAGSVSAMFGSAVWQLVASFLKLPISGTHCIVGATIGFSLVAKGQEGVKWSELIKIVMSWFISPLLSGIMSGILFFLVRAFILRKTDPVPNGLRALPVFYACTVGINLFSIMYTGAPLLGFDKLPLWGTILISVGCAVFCALIVWFFVCPRMKRKIEREIKSSPSESPLMEKKNSLKEDHEETKLSVSDIETRSPVSEVGSATVPLRAVVEERTVSFKLGDLEEAPERERLPSVDLKEETSIDSAMNGAVQLPNGNLVQFNQAVSNQMNSSGHYQYHTVHKDSGLYKELLHKLHLAKVGDCMGDSGDKPLRRNNSYTSYTMAICGMPLDSFRAKEGEQKGEEMEKLTWPNAESKKRIRMDSYTSYCNAVSDIHSASEMDMSVKAEMGLGDRKGSSSSLEEWYDQDKPEVSLLFQFLQILTACFGSFAHGGNDVSNAIGPLVALYLVYDTGDVSSKVATPIWLLLYGGVGICIGLWVWGRRVIQTMGKDLTPITPSSGFSIELASALTVVIASNIGLPISTTHCKVGSVVSVGWLRSKKAVDWRLFRNIFMAWFVTVPISGVISAAIMAVFKYVIL.

A run of 6 helical transmembrane segments spans residues 25 to 45 (YLWMLILGFIIAFVLAFSVGA), 66 to 86 (ACILASIFETVGSVLLGAKVS), 106 to 126 (LMAGSVSAMFGSAVWQLVASF), 162 to 182 (IVMSWFISPLLSGIMSGILFF), 207 to 227 (ACTVGINLFSIMYTGAPLLGF), and 234 to 254 (GTILISVGCAVFCALIVWFFV). Serine 269 and serine 273 each carry phosphoserine. The segment at 269–296 (SPSESPLMEKKNSLKEDHEETKLSVSDI) is disordered. Residues 275–290 (LMEKKNSLKEDHEETK) are compositionally biased toward basic and acidic residues. A run of 4 helical transmembrane segments spans residues 515 to 535 (VSLLFQFLQILTACFGSFAHG), 562 to 582 (VATPIWLLLYGGVGICIGLWV), 604 to 624 (FSIELASALTVVIASNIGLPI), and 654 to 674 (IFMAWFVTVPISGVISAAIMA). The segment at 554 to 562 (DTGDVSSKV) is a.

It belongs to the inorganic phosphate transporter (PiT) (TC 2.A.20) family.

The protein localises to the cell membrane. It catalyses the reaction 2 Na(+)(out) + phosphate(out) = 2 Na(+)(in) + phosphate(in). In terms of biological role, sodium-phosphate symporter which preferentially transports the monovalent form of phosphate with a stoichiometry of two sodium ions per phosphate ion. May play a role in extracellular matrix and cartilage calcification as well as in vascular calcification. Essential for cell proliferation but this function is independent of its phosphate transporter activity. The polypeptide is Sodium-dependent phosphate transporter 1 (Slc20a1) (Felis catus (Cat)).